A 525-amino-acid polypeptide reads, in one-letter code: Light-independent protochlorophyllide reductase subunit B (525 aa).

D36 is a binding site for [4Fe-4S] cluster. The Proton donor role is filled by D286. 421-422 lines the substrate pocket; that stretch reads GL.

Belongs to the ChlB/BchB/BchZ family. In terms of assembly, protochlorophyllide reductase is composed of three subunits; ChlL, ChlN and ChlB. Forms a heterotetramer of two ChlB and two ChlN subunits. Requires [4Fe-4S] cluster as cofactor.

It carries out the reaction chlorophyllide a + oxidized 2[4Fe-4S]-[ferredoxin] + 2 ADP + 2 phosphate = protochlorophyllide a + reduced 2[4Fe-4S]-[ferredoxin] + 2 ATP + 2 H2O. It participates in porphyrin-containing compound metabolism; chlorophyll biosynthesis (light-independent). Its function is as follows. Component of the dark-operative protochlorophyllide reductase (DPOR) that uses Mg-ATP and reduced ferredoxin to reduce ring D of protochlorophyllide (Pchlide) to form chlorophyllide a (Chlide). This reaction is light-independent. The NB-protein (ChlN-ChlB) is the catalytic component of the complex. This is Light-independent protochlorophyllide reductase subunit B from Prochlorococcus marinus (strain NATL2A).